The chain runs to 1031 residues: Protein translocase subunit SecA (1031 aa).

ATP contacts are provided by residues Q143, 161 to 165 (GEGKT), and D661. The span at 963–973 (KERLVAKHEES) shows a compositional bias: basic and acidic residues. The interval 963–1031 (KERLVAKHEE…GKKYKNCCGR (69 aa)) is disordered. Residues C1017, C1019, C1028, and C1029 each contribute to the Zn(2+) site.

This sequence belongs to the SecA family. Monomer and homodimer. Part of the essential Sec protein translocation apparatus which comprises SecA, SecYEG and auxiliary proteins SecDF. Other proteins may also be involved. Zn(2+) is required as a cofactor.

It localises to the cell inner membrane. The protein localises to the cytoplasm. The catalysed reaction is ATP + H2O + cellular proteinSide 1 = ADP + phosphate + cellular proteinSide 2.. Part of the Sec protein translocase complex. Interacts with the SecYEG preprotein conducting channel. Has a central role in coupling the hydrolysis of ATP to the transfer of proteins into and across the cell membrane, serving as an ATP-driven molecular motor driving the stepwise translocation of polypeptide chains across the membrane. The protein is Protein translocase subunit SecA of Prosthecochloris aestuarii (strain DSM 271 / SK 413).